A 200-amino-acid polypeptide reads, in one-letter code: Glutathione S-transferase 1-1 (200 aa).

The GST N-terminal domain maps to 1–73 (GSSPCRSVIM…YLVEKYGKTD (73 aa)). Glutathione-binding positions include Ser-2, 43 to 45 (HTI), and 57 to 59 (ESR). In terms of domain architecture, GST C-terminal spans 79 to 200 (CPKKRAVINQ…AGCLEFKKFF (122 aa)).

It belongs to the GST superfamily. Theta family. In terms of assembly, homodimer.

It catalyses the reaction RX + glutathione = an S-substituted glutathione + a halide anion + H(+). It carries out the reaction 1,1,1-trichloro-2,2-bis(4-chlorophenyl)ethane = 1,1-dichloro-2,2-bis(4-chlorophenyl)ethylene + chloride + H(+). In terms of biological role, conjugation of reduced glutathione to a wide number of exogenous and endogenous hydrophobic electrophiles. Has DDT dehydrochlorinase activity. This Drosophila mauritiana (Fruit fly) protein is Glutathione S-transferase 1-1 (GstD1).